The primary structure comprises 118 residues: Small ribosomal subunit protein uS13 (118 aa).

Residues 94-118 (GLPVRGQRTKTNARTRKGPCKPIKK) form a disordered region.

The protein belongs to the universal ribosomal protein uS13 family. As to quaternary structure, part of the 30S ribosomal subunit. Forms a loose heterodimer with protein S19. Forms two bridges to the 50S subunit in the 70S ribosome.

Its function is as follows. Located at the top of the head of the 30S subunit, it contacts several helices of the 16S rRNA. In the 70S ribosome it contacts the 23S rRNA (bridge B1a) and protein L5 of the 50S subunit (bridge B1b), connecting the 2 subunits; these bridges are implicated in subunit movement. Contacts the tRNAs in the A and P-sites. This chain is Small ribosomal subunit protein uS13, found in Salmonella typhi.